The primary structure comprises 97 residues: uncharacterized protein (97 aa).

This is an uncharacterized protein from Schizosaccharomyces pombe (strain 972 / ATCC 24843) (Fission yeast).